The following is a 357-amino-acid chain: Peptide chain release factor 1 (357 aa).

The residue at position 236 (Gln236) is an N5-methylglutamine. Basic and acidic residues predominate over residues Glu283–Arg309. The disordered stretch occupies residues Glu283–Phe313.

The protein belongs to the prokaryotic/mitochondrial release factor family. Post-translationally, methylated by PrmC. Methylation increases the termination efficiency of RF1.

Its subcellular location is the cytoplasm. Functionally, peptide chain release factor 1 directs the termination of translation in response to the peptide chain termination codons UAG and UAA. The sequence is that of Peptide chain release factor 1 from Rickettsia bellii (strain OSU 85-389).